A 198-amino-acid polypeptide reads, in one-letter code: Acireductone dioxygenase 2 (198 aa).

The Fe(2+) site is built by H99, H101, E105, and H144. Residues H99, H101, E105, and H144 each coordinate Ni(2+).

It belongs to the acireductone dioxygenase (ARD) family. It depends on Fe(2+) as a cofactor. The cofactor is Ni(2+). As to expression, ubiquitous.

It localises to the cytoplasm. It is found in the nucleus. The enzyme catalyses 1,2-dihydroxy-5-(methylsulfanyl)pent-1-en-3-one + O2 = 4-methylsulfanyl-2-oxobutanoate + formate + 2 H(+). It carries out the reaction 1,2-dihydroxy-5-(methylsulfanyl)pent-1-en-3-one + O2 = 3-(methylsulfanyl)propanoate + CO + formate + 2 H(+). It participates in amino-acid biosynthesis; L-methionine biosynthesis via salvage pathway; L-methionine from S-methyl-5-thio-alpha-D-ribose 1-phosphate: step 5/6. In terms of biological role, catalyzes 2 different reactions between oxygen and the acireductone 1,2-dihydroxy-3-keto-5-methylthiopentene (DHK-MTPene) depending upon the metal bound in the active site. Fe-containing acireductone dioxygenase (Fe-ARD) produces formate and 2-keto-4-methylthiobutyrate (KMTB), the alpha-ketoacid precursor of methionine in the methionine recycle pathway. Ni-containing acireductone dioxygenase (Ni-ARD) produces methylthiopropionate, carbon monoxide and formate, and does not lie on the methionine recycle pathway. The sequence is that of Acireductone dioxygenase 2 (ARD2) from Oryza sativa subsp. indica (Rice).